A 256-amino-acid chain; its full sequence is uncharacterized protein (256 aa).

A signal peptide spans Met-1 to Gly-24. The N-palmitoyl cysteine moiety is linked to residue Cys-25. Residue Cys-25 is the site of S-diacylglycerol cysteine attachment.

It belongs to the staphylococcal tandem lipoprotein family.

Its subcellular location is the cell membrane. This is an uncharacterized protein from Staphylococcus aureus (strain MW2).